The chain runs to 479 residues: PTS system MurNAc-GlcNAc-specific EIIBC component (479 aa).

In terms of domain architecture, PTS EIIB type-1 spans glutamine 5–glutamate 87. The Phosphocysteine intermediate; for EIIB activity role is filled by cysteine 27. The PTS EIIC type-1 domain occupies lysine 125–aspartate 479. The next 10 helical transmembrane spans lie at isoleucine 130 to valine 150, valine 169 to isoleucine 189, phenylalanine 195 to threonine 215, leucine 229 to isoleucine 249, isoleucine 269 to valine 289, isoleucine 303 to glycine 323, leucine 344 to valine 364, alanine 379 to leucine 399, phenylalanine 403 to isoleucine 423, and leucine 445 to phenylalanine 465.

The protein localises to the cell membrane. The enzyme catalyses N-acetyl-beta-D-muramate-(1-&gt;4)-N-acetyl-D-glucosamine(out) + N(pros)-phospho-L-histidyl-[protein] = 6-phospho-N-acetyl-beta-D-muramate-(1-&gt;4)-N-acetyl-D-glucosamine(in) + L-histidyl-[protein]. Its pathway is cell wall biogenesis; peptidoglycan recycling. Its function is as follows. The phosphoenolpyruvate-dependent sugar phosphotransferase system (sugar PTS), a major carbohydrate active transport system, catalyzes the phosphorylation of incoming sugar substrates concomitantly with their translocation across the cell membrane. This system is involved in the uptake and phosphorylation of MurNAc-GlcNAc, the principle peptidoglycan turnover product of S.aureus, yielding cytoplasmic MurNAc 6P-GlcNAc. The protein is PTS system MurNAc-GlcNAc-specific EIIBC component of Staphylococcus saprophyticus subsp. saprophyticus (strain ATCC 15305 / DSM 20229 / NCIMB 8711 / NCTC 7292 / S-41).